Consider the following 235-residue polypeptide: Segregation and condensation protein A (235 aa).

The protein belongs to the ScpA family. As to quaternary structure, component of a cohesin-like complex composed of ScpA, ScpB and the Smc homodimer, in which ScpA and ScpB bind to the head domain of Smc. The presence of the three proteins is required for the association of the complex with DNA.

The protein localises to the cytoplasm. In terms of biological role, participates in chromosomal partition during cell division. May act via the formation of a condensin-like complex containing Smc and ScpB that pull DNA away from mid-cell into both cell halves. In Streptococcus equi subsp. zooepidemicus (strain H70), this protein is Segregation and condensation protein A.